We begin with the raw amino-acid sequence, 373 residues long: S-adenosylmethionine:tRNA ribosyltransferase-isomerase (373 aa).

Belongs to the QueA family. Monomer.

It localises to the cytoplasm. It carries out the reaction 7-aminomethyl-7-carbaguanosine(34) in tRNA + S-adenosyl-L-methionine = epoxyqueuosine(34) in tRNA + adenine + L-methionine + 2 H(+). Its pathway is tRNA modification; tRNA-queuosine biosynthesis. Its function is as follows. Transfers and isomerizes the ribose moiety from AdoMet to the 7-aminomethyl group of 7-deazaguanine (preQ1-tRNA) to give epoxyqueuosine (oQ-tRNA). The sequence is that of S-adenosylmethionine:tRNA ribosyltransferase-isomerase from Caulobacter sp. (strain K31).